The following is a 244-amino-acid chain: Derlin-2.2 (244 aa).

At 1-21 (MAQAVEEWYKQMPIITRSYLT) the chain is on the cytoplasmic side. Residues 22 to 42 (AAVITTVGCSLDIISPYNLYL) traverse the membrane as a helical segment. The Lumenal portion of the chain corresponds to 43 to 96 (NPTLVVKQYQYWRLVTNFLYFRKMDLDFMFHMFFLARYCKLLEENSFRGKTADF). Residues 97–117 (LYMLLFGASVLTGIVLIGGMI) form a helical membrane-spanning segment. Over 118–121 (PYLS) the chain is Cytoplasmic. The helical transmembrane segment at 122 to 142 (ASFAKIIFLSNSLTFMMVYVW) threads the bilayer. Over 143 to 152 (SKQNPYIHMS) the chain is Lumenal. The chain crosses the membrane as a helical span at residues 153 to 173 (FLGLFTFTAAYLPWVLLGFSI). Over 174 to 244 (LVGASAWVDL…AAPFDEIHQD (71 aa)) the chain is Cytoplasmic.

It belongs to the derlin family.

Its subcellular location is the endoplasmic reticulum membrane. In terms of biological role, may be involved in the degradation process of specific misfolded endoplasmic reticulum (ER) luminal proteins. The chain is Derlin-2.2 (DER2.2) from Arabidopsis thaliana (Mouse-ear cress).